Here is a 349-residue protein sequence, read N- to C-terminus: N-formyl peptide receptor 3 (349 aa).

The Extracellular portion of the chain corresponds to Met-1–Ile-27. 2 N-linked (GlcNAc...) asparagine glycosylation sites follow: Asn-4 and Asn-10. Residues Phe-28–Val-50 traverse the membrane as a helical segment. Residues Ala-51–Thr-61 are Cytoplasmic-facing. A helical membrane pass occupies residues Ile-62 to Val-83. Residues Ser-84–Leu-100 lie on the Extracellular side of the membrane. An intrachain disulfide couples Cys-98 to Cys-176. Residues Val-101–Leu-121 form a helical membrane-spanning segment. Residues Asp-122 to Ser-140 lie on the Cytoplasmic side of the membrane. Residues Leu-141 to Ile-162 traverse the membrane as a helical segment. Residues Phe-163–His-205 lie on the Extracellular side of the membrane. The chain crosses the membrane as a helical span at residues Phe-206 to Ala-226. The Cytoplasmic portion of the chain corresponds to Lys-227–Val-242. Residues Phe-243–Val-266 form a helical membrane-spanning segment. Residues Trp-267–Pro-286 are Extracellular-facing. The helical transmembrane segment at Thr-287–Gly-306 threads the bilayer. Over Ser-307–Glu-349 the chain is Cytoplasmic. Positions Val-328–Glu-349 are disordered. Positions Ser-331 to Ser-343 are enriched in polar residues.

Belongs to the G-protein coupled receptor 1 family.

Its subcellular location is the cell membrane. In terms of biological role, low affinity receptor for N-formyl-methionyl peptides, which are powerful neutrophils chemotactic factors. Binding of FMLP to the receptor causes activation of neutrophils. This response is mediated via a G-protein that activates a phosphatidylinositol-calcium second messenger system. The polypeptide is N-formyl peptide receptor 3 (FPR3) (Pongo pygmaeus (Bornean orangutan)).